Reading from the N-terminus, the 124-residue chain is Small ribosomal subunit protein uS12 (124 aa).

A 3-methylthioaspartic acid modification is found at aspartate 89.

The protein belongs to the universal ribosomal protein uS12 family. As to quaternary structure, part of the 30S ribosomal subunit. Contacts proteins S8 and S17. May interact with IF1 in the 30S initiation complex.

With S4 and S5 plays an important role in translational accuracy. Functionally, interacts with and stabilizes bases of the 16S rRNA that are involved in tRNA selection in the A site and with the mRNA backbone. Located at the interface of the 30S and 50S subunits, it traverses the body of the 30S subunit contacting proteins on the other side and probably holding the rRNA structure together. The combined cluster of proteins S8, S12 and S17 appears to hold together the shoulder and platform of the 30S subunit. This Mannheimia haemolytica (Pasteurella haemolytica) protein is Small ribosomal subunit protein uS12 (rpsL).